The following is a 455-amino-acid chain: DNA repair protein RadA (455 aa).

The C4-type zinc-finger motif lies at 11 to 28; that stretch reads CVGCGYVHPKWLGRCPEC. Residue 97-104 coordinates ATP; sequence GEPGIGKS. The RadA KNRFG motif signature appears at 250–254; that stretch reads KNRFG. The segment at 350-455 is lon-protease-like; the sequence is DIYVNVAGGI…IAEIFSKAKA (106 aa).

The protein belongs to the RecA family. RadA subfamily.

DNA-dependent ATPase involved in processing of recombination intermediates, plays a role in repairing DNA breaks. Stimulates the branch migration of RecA-mediated strand transfer reactions, allowing the 3' invading strand to extend heteroduplex DNA faster. Binds ssDNA in the presence of ADP but not other nucleotides, has ATPase activity that is stimulated by ssDNA and various branched DNA structures, but inhibited by SSB. Does not have RecA's homology-searching function. The chain is DNA repair protein RadA from Treponema pallidum (strain Nichols).